The following is a 255-amino-acid chain: Imidazole glycerol phosphate synthase subunit HisF (255 aa).

Catalysis depends on residues Asp-11 and Asp-130.

It belongs to the HisA/HisF family. Heterodimer of HisH and HisF.

It localises to the cytoplasm. The catalysed reaction is 5-[(5-phospho-1-deoxy-D-ribulos-1-ylimino)methylamino]-1-(5-phospho-beta-D-ribosyl)imidazole-4-carboxamide + L-glutamine = D-erythro-1-(imidazol-4-yl)glycerol 3-phosphate + 5-amino-1-(5-phospho-beta-D-ribosyl)imidazole-4-carboxamide + L-glutamate + H(+). The protein operates within amino-acid biosynthesis; L-histidine biosynthesis; L-histidine from 5-phospho-alpha-D-ribose 1-diphosphate: step 5/9. In terms of biological role, IGPS catalyzes the conversion of PRFAR and glutamine to IGP, AICAR and glutamate. The HisF subunit catalyzes the cyclization activity that produces IGP and AICAR from PRFAR using the ammonia provided by the HisH subunit. This chain is Imidazole glycerol phosphate synthase subunit HisF, found in Prochlorococcus marinus subsp. pastoris (strain CCMP1986 / NIES-2087 / MED4).